A 271-amino-acid polypeptide reads, in one-letter code: Catechol O-methyltransferase (271 aa).

Residues 1 to 6 are Cytoplasmic-facing; sequence MPEAPP. A helical; Signal-anchor for type II membrane protein membrane pass occupies residues 7-26; the sequence is LLLAAVLLGLVLLVVLLLLL. Residues 27–271 lie on the Extracellular side of the membrane; that stretch reads RHWGWGLCLI…YKGPGSEAGP (245 aa). S-adenosyl-L-methionine is bound by residues Val-92, Glu-114, Ser-122, Glu-140, Ile-141, 167–170, Ser-169, and Asp-191; that span reads GASQ. Asp-191 serves as a coordination point for Mg(2+). Lys-194 contributes to the substrate binding site. Mg(2+) is bound by residues Asp-219 and Asn-220. Substrate-binding residues include Asn-220 and Glu-249. The residue at position 267 (Ser-267) is a Phosphoserine.

Belongs to the class I-like SAM-binding methyltransferase superfamily. Cation-dependent O-methyltransferase family. Mg(2+) serves as cofactor. Post-translationally, the N-terminus is blocked. Brain, liver, placenta, lymphocytes and erythrocytes.

The protein localises to the cytoplasm. The protein resides in the cell membrane. The catalysed reaction is a catechol + S-adenosyl-L-methionine = a guaiacol + S-adenosyl-L-homocysteine + H(+). It catalyses the reaction 2-hydroxyestrone + S-adenosyl-L-methionine = 2-hydroxy-3-methoxy-estrone + S-adenosyl-L-homocysteine + H(+). It carries out the reaction 4-hydroxyestrone + S-adenosyl-L-methionine = 4-methoxyestrone + S-adenosyl-L-homocysteine + H(+). The enzyme catalyses 2-hydroxyestrone + S-adenosyl-L-methionine = 2-methoxyestrone + S-adenosyl-L-homocysteine + H(+). The catalysed reaction is 4-hydroxy-17beta-estradiol + S-adenosyl-L-methionine = 4-methoxy-17beta-estradiol + S-adenosyl-L-homocysteine + H(+). It catalyses the reaction 2-hydroxy-17beta-estradiol + S-adenosyl-L-methionine = 2-hydroxy-3-methoxy-17beta-estradiol + S-adenosyl-L-homocysteine + H(+). It carries out the reaction 2-hydroxy-17beta-estradiol + S-adenosyl-L-methionine = 2-methoxy-17beta-estradiol + S-adenosyl-L-homocysteine + H(+). Catalyzes the O-methylation, and thereby the inactivation, of catecholamine neurotransmitters and catechol hormones. Also shortens the biological half-lives of certain neuroactive drugs, like L-DOPA, alpha-methyl DOPA and isoproterenol. The polypeptide is Catechol O-methyltransferase (Homo sapiens (Human)).